The sequence spans 438 residues: 23S rRNA (uracil(1939)-C(5))-methyltransferase RlmD (438 aa).

In terms of domain architecture, TRAM spans 10–68 (KTKNVQTITADILDLDYQGLGVAKINGKTWFIENALPHEKVECRILEDKRQYGHAIVKK). 4 residues coordinate [4Fe-4S] cluster: C81, C87, C90, and C168. Positions 271, 300, 305, 321, 348, and 369 each coordinate S-adenosyl-L-methionine. C395 serves as the catalytic Nucleophile.

The protein belongs to the class I-like SAM-binding methyltransferase superfamily. RNA M5U methyltransferase family. RlmD subfamily.

The catalysed reaction is uridine(1939) in 23S rRNA + S-adenosyl-L-methionine = 5-methyluridine(1939) in 23S rRNA + S-adenosyl-L-homocysteine + H(+). In terms of biological role, catalyzes the formation of 5-methyl-uridine at position 1939 (m5U1939) in 23S rRNA. This chain is 23S rRNA (uracil(1939)-C(5))-methyltransferase RlmD, found in Haemophilus influenzae (strain ATCC 51907 / DSM 11121 / KW20 / Rd).